The sequence spans 202 residues: Imidazoleglycerol-phosphate dehydratase (202 aa).

It belongs to the imidazoleglycerol-phosphate dehydratase family.

Its subcellular location is the cytoplasm. It catalyses the reaction D-erythro-1-(imidazol-4-yl)glycerol 3-phosphate = 3-(imidazol-4-yl)-2-oxopropyl phosphate + H2O. The protein operates within amino-acid biosynthesis; L-histidine biosynthesis; L-histidine from 5-phospho-alpha-D-ribose 1-diphosphate: step 6/9. In Rhizobium leguminosarum bv. trifolii (strain WSM2304), this protein is Imidazoleglycerol-phosphate dehydratase.